The chain runs to 348 residues: Secreted frizzled-related protein 4 (348 aa).

Positions 1 to 18 (MLLSILVALCLCVRLALG) are cleaved as a signal peptide. The FZ domain maps to 19 to 139 (VRGAPCEAVR…VYDRGVCISP (121 aa)). Disulfide bonds link cysteine 24-cysteine 85, cysteine 32-cysteine 78, cysteine 69-cysteine 108, cysteine 97-cysteine 136, and cysteine 101-cysteine 125. N-linked (GlcNAc...) asparagine glycans are attached at residues asparagine 38 and asparagine 68. N-linked (GlcNAc...) asparagine glycans are attached at residues asparagine 116, asparagine 194, and asparagine 240. In terms of domain architecture, NTR spans 178 to 296 (CKCKKVKPTL…WEERLQEQQR (119 aa)). Positions 289-303 (ERLQEQQRTTQDKKQ) are enriched in basic and acidic residues. A disordered region spans residues 289-348 (ERLQEQQRTTQDKKQIASRTSRSNPPKPKGRSPASKPASPKKNIKARSAPKKSNPKKSTS). Over residues 330–348 (KNIKARSAPKKSNPKKSTS) the composition is skewed to basic residues.

The protein belongs to the secreted frizzled-related protein (sFRP) family. As to expression, expressed in the involuting mammary gland, ovarian corpus luteum and prostate. In ovaries, low levels found in granulosa cells. High levels in corpora lutea of pregnant animals.

The protein localises to the secreted. Its function is as follows. Soluble frizzled-related proteins (sFRPS) function as modulators of Wnt signaling through direct interaction with Wnts. They have a role in regulating cell growth and differentiation in specific cell types. SFRP4 plays a role in bone morphogenesis. May also act as a regulator of adult uterine morphology and function. May also increase apoptosis during ovulation possibly through modulation of FZ1/FZ4/WNT4 signaling. Has phosphaturic effects by specifically inhibiting sodium-dependent phosphate uptake. This Rattus norvegicus (Rat) protein is Secreted frizzled-related protein 4 (Sfrp4).